A 445-amino-acid polypeptide reads, in one-letter code: mRNA cleavage and polyadenylation factor CLP1 (445 aa).

Residues D33, K72, and 133–138 each bind ATP; that span reads QTGKTS.

The protein belongs to the Clp1 family. Clp1 subfamily. As to quaternary structure, component of the cleavage factor IA (CF IA) complex, which is a heterohexameric complex with 2:2:1:1 stoichiometry of RNA14, RNA15, PCF11 and CLP1. It contains 2 copies of an RNA14-RNA15 dimer and 1 copy of CLP1-PCF11. The complex interacts with the cleavage factor HRB1/CF IB to form the cleavage factor I (CF I) complex, and binds to RNA. Interacts directly with PCF11. Interacts with the CPF components CFT1, PTA1, PFS2, YSH1 and SSU72.

It is found in the nucleus. Functionally, component of the cleavage factor IA (CF IA) complex, which is involved in the endonucleolytic cleavage during polyadenylation-dependent pre-mRNA 3'-end formation. Associates with HRB1/CF IB to form the cleavage factor I (CF I) complex. CF I is required for correct positioning of a larger protein complex, the cleavage and polyadenylation factor (CPF) complex, which contains the catalytic subunits executing mRNA cleavage and polyadenylation. CLP1 mediates interactions between CF IA and CPF factors. CLP1 is also involved in maintaining the CF IA interaction with the C-terminal domain of RNA Pol II largest subunit via PCF11, which links pre-mRNA 3'-end processing to transcription termination. This Saccharomyces cerevisiae (strain YJM789) (Baker's yeast) protein is mRNA cleavage and polyadenylation factor CLP1.